Reading from the N-terminus, the 404-residue chain is Growth/differentiation factor 6-A (404 aa).

A signal peptide spans 1–24 (MDALRAVAFYALFVFLWSLPCCQS). Positions 25–284 (AALISQKRSK…LQFKARRRRR (260 aa)) are excised as a propeptide. Asn-91 carries an N-linked (GlcNAc...) asparagine glycan. The tract at residues 263 to 304 (KSRGDDDEEESALQFKARRRRRTALNNRHGKRHGKKSKSRCS) is disordered. A compositionally biased stretch (basic residues) spans 278–304 (KARRRRRTALNNRHGKRHGKKSKSRCS). 3 disulfide bridges follow: Cys-303-Cys-369, Cys-332-Cys-401, and Cys-336-Cys-403.

Belongs to the TGF-beta family. Homodimer; disulfide-linked. In terms of tissue distribution, first expressed in late gastrula stage embryos (9.5 hours post fertilization (hpf)) in anterior neuroectoderm corresponding to the future dorsal part of the brain. Shortly after tailbud formation (11 hpf), expression expands to the entire neural region and is subsequently expressed in derivatives of the lateral neural plate and migrating neural crest cells, with the future midbrain and hindbrain showing strong expression. Also expressed weakly and transiently in the posterior embryo from 11.5 hpf to 15 hpf in the lateral mesoderm, and in ectoderm above the neural keel. At 14 hpf, expressed along the entire length of the embryo and starting around the 16-somite stage, expressed in the dorsal quadrant of the retina, representing the distal tip of the eye anlage. At this stage, also expressed in the hatching gland and the hypochord. At 24 hpf, expressed in the roof plate outlining the fourth brain ventricle, in the posterior hypochord, the primitive gut endoderm, the ventral tail mesenchyme, the dorsal part of the neural tube and the dorsal fin. Weakly expressed in the dorsal part of the posterior spinal cord and in blood cell precursors.

The protein localises to the secreted. Functionally, growth factor that controls proliferation and cellular differentiation in the retina. Plays a key role in regulating apoptosis during retinal development. Establishes dorsal-ventral positional information in the retina and controls the formation of the retinotectal map. Functions maternally in dorsal/ventral patterning to induce the expression of the zygotic bmp2b and bmp4 genes and ventralize embryos. Zygotic expression does not appear to regulate axis specification, but instead functions to establish the integrity of the axial vessels during embryonic development. May be involved in maintaining the identity of cells of the dorsal-most neural tube and of at least a subset of neural crest cells. In Danio rerio (Zebrafish), this protein is Growth/differentiation factor 6-A (gdf6a).